The sequence spans 305 residues: Glutaminase (305 aa).

Positions 63, 113, 158, 165, 189, 241, and 259 each coordinate substrate.

Belongs to the glutaminase family. In terms of assembly, homotetramer.

The catalysed reaction is L-glutamine + H2O = L-glutamate + NH4(+). This Aliarcobacter butzleri (strain RM4018) (Arcobacter butzleri) protein is Glutaminase.